We begin with the raw amino-acid sequence, 741 residues long: Catalase-peroxidase 2 (741 aa).

The first 28 residues, 1 to 28, serve as a signal peptide directing secretion; the sequence is MQKKRVGKSVVAALAIIAMSAGTVAAWA. The segment at residues 107–228 is a cross-link (tryptophyl-tyrosyl-methioninium (Trp-Tyr) (with M-254)); that stretch reads WHGAGTYRTY…LAATQMGLIY (122 aa). His108 acts as the Proton acceptor in catalysis. Residues 228–254 constitute a cross-link (tryptophyl-tyrosyl-methioninium (Tyr-Met) (with W-107)); it reads YVNPEGPNGNPDPVAAAKDIRDAFGRM. His269 is a binding site for heme b.

It belongs to the peroxidase family. Peroxidase/catalase subfamily. Homodimer or homotetramer. Heme b is required as a cofactor. Formation of the three residue Trp-Tyr-Met cross-link is important for the catalase, but not the peroxidase activity of the enzyme.

The catalysed reaction is H2O2 + AH2 = A + 2 H2O. The enzyme catalyses 2 H2O2 = O2 + 2 H2O. Bifunctional enzyme with both catalase and broad-spectrum peroxidase activity. This Burkholderia ambifaria (strain ATCC BAA-244 / DSM 16087 / CCUG 44356 / LMG 19182 / AMMD) (Burkholderia cepacia (strain AMMD)) protein is Catalase-peroxidase 2.